The following is a 300-amino-acid chain: NAD kinase (300 aa).

The active-site Proton acceptor is aspartate 75. Residues 75–76, 149–150, arginine 177, aspartate 179, 190–195, alanine 214, and glutamine 248 each bind NAD(+); these read DG, ND, and TAYALS.

The protein belongs to the NAD kinase family. Requires a divalent metal cation as cofactor.

It localises to the cytoplasm. It carries out the reaction NAD(+) + ATP = ADP + NADP(+) + H(+). In terms of biological role, involved in the regulation of the intracellular balance of NAD and NADP, and is a key enzyme in the biosynthesis of NADP. Catalyzes specifically the phosphorylation on 2'-hydroxyl of the adenosine moiety of NAD to yield NADP. This chain is NAD kinase, found in Burkholderia cenocepacia (strain ATCC BAA-245 / DSM 16553 / LMG 16656 / NCTC 13227 / J2315 / CF5610) (Burkholderia cepacia (strain J2315)).